The following is a 555-amino-acid chain: Connector enhancer of kinase suppressor of ras 3 (555 aa).

One can recognise an SAM domain in the interval 7-72; sequence WSPKQVVDWT…LEAVDLLCAL (66 aa). The CRIC domain maps to 80–174; sequence TMKNLVLKLR…TAVQKDCLIA (95 aa). The PDZ domain maps to 211–293; the sequence is EVHLPNVRPG…GVVLLLKKRP (83 aa). Disordered regions lie at residues 308 to 333, 362 to 389, and 518 to 538; these read RWKPPLVQTSPPPTTTQSPESTMDAS, SFGYRGHSKSKQPLPVRKGSESPNSFLD, and PFQEEGSKKKSASSSAKASSG. Over residues 311–329 the composition is skewed to low complexity; sequence PPLVQTSPPPTTTQSPEST. Residues 325–546 form the DUF1170 domain; sequence SPESTMDASL…SGEPSLLVSW (222 aa). Phosphoserine occurs at positions 381 and 383.

This sequence belongs to the CNKSR family. As to quaternary structure, interacts with epithelial sodium channel ENaC. Interacts directly with SCNN1A (ENaC subunit alpha) and SCNN1B (ENaC subunit beta) C-terminal tails. Interacts with ENaC regulatory proteins NEDD4L, RAF1 and SGK1. As to expression, expressed in kidney.

Its subcellular location is the cytoplasm. It localises to the apical cell membrane. In terms of biological role, involved in transepithelial sodium transport. Regulates aldosterone-induced and epithelial sodium channel (ENaC)-mediated sodium transport through regulation of ENaC cell surface expression. Acts as a scaffold protein coordinating the assembly of an ENaC-regulatory complex (ERC). The polypeptide is Connector enhancer of kinase suppressor of ras 3 (Cnksr3) (Mus musculus (Mouse)).